Consider the following 444-residue polypeptide: Multidrug resistance protein MdtA (444 aa).

The N-terminal stretch at 1 to 20 is a signal peptide; sequence MKSQSKRTSRLFVFVGVVVA. The span at 37–52 shows a compositional bias: polar residues; the sequence is NNTSGAQQSARGQDTS. 2 disordered regions span residues 37–60 and 398–444; these read NNTS…RNTP and TPRS…AEKS. Residues 406 to 419 are compositionally biased toward low complexity; that stretch reads ANPASAEKAAAEAE. Over residues 435 to 444 the composition is skewed to polar residues; it reads ARSTTAAEKS.

Belongs to the membrane fusion protein (MFP) (TC 8.A.1) family. As to quaternary structure, part of a tripartite efflux system composed of MdtA, MdtB and MdtC.

Its subcellular location is the cell inner membrane. The protein is Multidrug resistance protein MdtA of Yersinia pestis bv. Antiqua (strain Antiqua).